We begin with the raw amino-acid sequence, 711 residues long: DNA ligase (711 aa).

The interval 1–21 (MNATHRGAQADASAPAGGLPP) is disordered. The segment covering 10-21 (ADASAPAGGLPP) has biased composition (low complexity). NAD(+) is bound by residues 52–56 (DAEYD), 101–102 (SL), and glutamate 146. The active-site N6-AMP-lysine intermediate is the lysine 148. 4 residues coordinate NAD(+): arginine 169, glutamate 205, lysine 322, and lysine 346. Zn(2+) is bound by residues cysteine 440, cysteine 443, cysteine 458, and cysteine 464. Positions 623–711 (RAPAPLAGKT…VGAGQPGEQS (89 aa)) constitute a BRCT domain.

The protein belongs to the NAD-dependent DNA ligase family. LigA subfamily. Mg(2+) serves as cofactor. It depends on Mn(2+) as a cofactor.

The enzyme catalyses NAD(+) + (deoxyribonucleotide)n-3'-hydroxyl + 5'-phospho-(deoxyribonucleotide)m = (deoxyribonucleotide)n+m + AMP + beta-nicotinamide D-nucleotide.. In terms of biological role, DNA ligase that catalyzes the formation of phosphodiester linkages between 5'-phosphoryl and 3'-hydroxyl groups in double-stranded DNA using NAD as a coenzyme and as the energy source for the reaction. It is essential for DNA replication and repair of damaged DNA. The chain is DNA ligase from Cupriavidus pinatubonensis (strain JMP 134 / LMG 1197) (Cupriavidus necator (strain JMP 134)).